Consider the following 283-residue polypeptide: uncharacterized protein (283 aa).

Over residues 208–232 (SMENKVNETQNSKEDEKKKNDGDGK) the composition is skewed to basic and acidic residues. A disordered region spans residues 208–237 (SMENKVNETQNSKEDEKKKNDGDGKRSKKK).

This is an uncharacterized protein from Saccharomyces cerevisiae (strain ATCC 204508 / S288c) (Baker's yeast).